The chain runs to 176 residues: Deoxyuridine 5'-triphosphate nucleotidohydrolase (176 aa).

Residues 67–69 (RSG), N80, 84–86 (TVD), and K94 contribute to the substrate site. The interval 141 to 176 (GGFGSTGGHASVDGAEGGITHGGNSYASVVSDREGQ) is disordered.

Belongs to the dUTPase family. Mg(2+) serves as cofactor.

It catalyses the reaction dUTP + H2O = dUMP + diphosphate + H(+). It functions in the pathway pyrimidine metabolism; dUMP biosynthesis; dUMP from dCTP (dUTP route): step 2/2. Functionally, this enzyme is involved in nucleotide metabolism: it produces dUMP, the immediate precursor of thymidine nucleotides and it decreases the intracellular concentration of dUTP so that uracil cannot be incorporated into DNA. The polypeptide is Deoxyuridine 5'-triphosphate nucleotidohydrolase (Streptomyces griseus subsp. griseus (strain JCM 4626 / CBS 651.72 / NBRC 13350 / KCC S-0626 / ISP 5235)).